A 146-amino-acid polypeptide reads, in one-letter code: Transmembrane protein 207 (146 aa).

An N-terminal signal peptide occupies residues 1 to 29 (MSRSRLFSVTSAISTIGILCLPLFQLVLS). Residues 52–72 (IWILLLLVLVAALLCGAVVLC) traverse the membrane as a helical segment.

As to quaternary structure, interacts with WWOX. As to expression, expressed in some signet-ring cell carcinoma, especially those showing high invasion and metastatic activity (at protein level).

The protein localises to the membrane. This chain is Transmembrane protein 207 (TMEM207), found in Homo sapiens (Human).